The following is a 263-amino-acid chain: MESRNSYENKIDEISSLSESKEHPIDIQEKKDAFVNEFKGVLFDKNTRSSELLFNFYECCYKFLPRAQPQDKIDSYNSALQAFSIFCSSTLTHNNIGFDFKLFPEVKLSGEHLETVFKYKNGDDVREIAKINITLQKEEGGLYNLRGLDFKGCFFSGQNFSNYDIQYVNWGTSLFDVDTPCIFNAPAYNKSNEKSLKPVSENGLSGVLTDRNNKIKLITGVAPFDDILFMDDDFDDSSSEDDPVENSPVVTSPVVSSSKSSFQ.

Positions 233–244 are enriched in acidic residues; the sequence is DFDDSSSEDDPV. The disordered stretch occupies residues 233 to 263; it reads DFDDSSSEDDPVENSPVVTSPVVSSSKSSFQ. Residues 245–263 show a composition bias toward low complexity; that stretch reads ENSPVVTSPVVSSSKSSFQ.

This is Protein YpjB (ypjB) from Escherichia coli (strain K12).